A 276-amino-acid polypeptide reads, in one-letter code: uncharacterized protein (276 aa).

The tract at residues 1–20 (MMSDEQHQGGDGQTTTNTNT) is disordered.

This is an uncharacterized protein from Dictyostelium discoideum (Social amoeba).